Consider the following 175-residue polypeptide: Anterior gradient protein 2 homolog (175 aa).

The N-terminal stretch at 1–20 is a signal peptide; that stretch reads MEKISVSAFLLLVALSYTLA. The tract at residues 21–40 is required to promote cell adhesion; that stretch reads RDTTVKPAAKKDTKDSRPKL. 2 consecutive short sequence motifs (homodimer stabilization; interchain) follow at residues 45-54 and 60-67; these read SRGWGDQLIW and EALYKSKT.

The protein belongs to the AGR family. In terms of assembly, monomer and homodimer. Interacts with LYPD3 and DAG1 (alphaDAG1). Interacts with MUC2; disulfide-linked.

The protein resides in the secreted. The protein localises to the endoplasmic reticulum. In terms of biological role, required for MUC2 post-transcriptional synthesis and secretion. May play a role in the production of mucus by intestinal cells. Proto-oncogene that may play a role in cell migration, cell differentiation and cell growth. Promotes cell adhesion. This Pongo abelii (Sumatran orangutan) protein is Anterior gradient protein 2 homolog (AGR2).